The primary structure comprises 994 residues: E3 ubiquitin-protein ligase Arkadia (994 aa).

Residues Lys19, Lys28, Lys34, Lys47, Lys59, Lys73, Lys87, Lys96, and Lys110 each participate in a glycyl lysine isopeptide (Lys-Gly) (interchain with G-Cter in SUMO2) cross-link. Positions 66 to 89 are enriched in basic and acidic residues; it reads HLCDDSQKQEKEMNGNQQEQEKSL. A disordered region spans residues 66–106; it reads HLCDDSQKQEKEMNGNQQEQEKSLVVRKKRKSQQAGPSYVQ. The disordered stretch occupies residues 120–191; it reads QHLGTPSDED…HKWPRTETES (72 aa). Residues 132 to 151 are compositionally biased toward low complexity; the sequence is SSFSDCLSSPSSSLHFGDSD. The span at 164–173 shows a compositional bias: polar residues; sequence RHSQTILNAK. Lys173 is covalently cross-linked (Glycyl lysine isopeptide (Lys-Gly) (interchain with G-Cter in SUMO2)). Residues 174–184 show a composition bias toward basic residues; sequence SRSHSARSHKW. Glycyl lysine isopeptide (Lys-Gly) (interchain with G-Cter in SUMO2) cross-links involve residues Lys198 and Lys218. Residues 212 to 277 are disordered; the sequence is CRKRFVKNNS…SSSTEGEEDL (66 aa). Residues 234-247 are compositionally biased toward basic residues; that stretch reads MQRKKREVLARRKY. Residues 241–404 form an interaction with AXIN1 region; the sequence is VLARRKYALL…VPTTSARMES (164 aa). Positions 252-271 are enriched in low complexity; sequence SSSSSSENDLSSESSSSSST. Positions 300–304 match the SUMO interaction motif 1 (SIM) motif; the sequence is VVVIE. The SUMO interaction motif 2 (SIM) signature appears at 325 to 331; the sequence is EVEIVTV. The interval 337 to 371 is disordered; sequence SRSTLGHSRSHWSQGSSSHASRPQEPRNRSRISTV. Low complexity predominate over residues 347-357; it reads HWSQGSSSHAS. Residues 382–386 carry the SUMO interaction motif 3 (SIM) motif; the sequence is VVDLT. Disordered regions lie at residues 388-476, 508-537, 610-684, and 696-742; these read DEDE…AMPR, HGHH…DPAC, APSQ…VDYV, and ISSH…APPA. Polar residues predominate over residues 395–467; it reads VPTTSARMES…SRRTTSSAVT (73 aa). The segment covering 508–522 has biased composition (basic residues); sequence HGHHFQHHHHHHHTP. The span at 670–680 shows a compositional bias: pro residues; the sequence is NPPPQTQPPPQ. The ubiquitin binding stretch occupies residues 907–909; that stretch reads YPH. Glycyl lysine isopeptide (Lys-Gly) (interchain with G-Cter in SUMO2) cross-links involve residues Lys923 and Lys927. 2 residues coordinate Zn(2+): Cys942 and Cys945. The segment at 942–983 adopts an RING-type; atypical zinc-finger fold; the sequence is CTICLSILEEGEDVRRLPCMHLFHQVCVDQWLITNKKCPICR. The interval 957-961 is ubiquitin binding; that stretch reads RLPCM. 2 residues coordinate Zn(2+): His965 and Cys968.

Belongs to the Arkadia family. Monomer. Interacts with SMAD6, SMAD7, AXIN1, AXIN2 and SKIL isoform SNON. Interacts with (phosphorylated) SMAD2 and SMAD3. Part of a complex containing RNF111, AXIN1 and SMAD7. Interacts (via SIM domains) with SUMO1 and SUMO2. As to expression, broadly expressed.

Its subcellular location is the nucleus. The protein localises to the cytoplasm. The protein resides in the PML body. The catalysed reaction is S-ubiquitinyl-[E2 ubiquitin-conjugating enzyme]-L-cysteine + [acceptor protein]-L-lysine = [E2 ubiquitin-conjugating enzyme]-L-cysteine + N(6)-ubiquitinyl-[acceptor protein]-L-lysine.. Its pathway is protein modification; protein ubiquitination. Binds free ubiquitin non-covalently via its RING-type zinc finger. Ubiquitin-binding leads to enhance the E3 ubiquitin-protein ligase activity by stabilizing the ubiquitin-conjugating enzyme E2 (donor ubiquitin) in the 'closed' conformation and activating ubiquitin transfer. Its function is as follows. E3 ubiquitin-protein ligase. Required for mesoderm patterning during embryonic development. Acts as an enhancer of the transcriptional responses of the SMAD2/SMAD3 effectors, which are activated downstream of BMP. Acts by mediating ubiquitination and degradation of SMAD inhibitors such as SMAD7, inducing their proteasomal degradation and thereby enhancing the transcriptional activity of TGF-beta and BMP. In addition to enhance transcription of SMAD2/SMAD3 effectors, also regulates their turnover by mediating their ubiquitination and subsequent degradation, coupling their activation with degradation, thereby ensuring that only effectors 'in use' are degraded. Activates SMAD3/SMAD4-dependent transcription by triggering signal-induced degradation of SNON isoform of SKIL. Associates with UBE2D2 as an E2 enzyme. Specifically binds polysumoylated chains via SUMO interaction motifs (SIMs) and mediates ubiquitination of sumoylated substrates. Catalyzes 'Lys-63'-linked ubiquitination of sumoylated XPC in response to UV irradiation, promoting nucleotide excision repair. Mediates ubiquitination and degradation of sumoylated PML. The regulation of the BMP-SMAD signaling is however independent of sumoylation and is not dependent of SUMO interaction motifs (SIMs). This chain is E3 ubiquitin-protein ligase Arkadia, found in Homo sapiens (Human).